Here is a 372-residue protein sequence, read N- to C-terminus: Chloroplast protein FOR GROWTH AND FERTILITY 2 (372 aa).

Residues M1–S20 are disordered. The N-terminal 78 residues, M1–S78, are a transit peptide targeting the chloroplast. A compositionally biased stretch (polar residues) spans P7–S20. The next 7 membrane-spanning stretches (helical) occupy residues V109 to F129, F161 to L181, A195 to L215, V231 to P251, G281 to P301, F309 to G329, and L352 to Y372.

As to expression, mostly expressed in leaves, stems and flowers, to a lower extent, in roots, floral bud, inflorescence and siliques, and, barely, in seedlings.

The protein resides in the plastid. Its subcellular location is the chloroplast membrane. It localises to the plastid membrane. Its function is as follows. Together with CGF1, essential protein which supports female gametogenesis and embryogenesis, probably by securing local energy supply. This chain is Chloroplast protein FOR GROWTH AND FERTILITY 2, found in Arabidopsis thaliana (Mouse-ear cress).